Consider the following 140-residue polypeptide: Truncated tyrosine phosphatase D1 (140 aa).

One can recognise a Tyrosine-protein phosphatase domain in the interval 1-140 (MRRPNCIAEI…SAQWIQFLKK (140 aa)).

It belongs to the protein-tyrosine phosphatase family.

The sequence is that of Truncated tyrosine phosphatase D1 (D1) from Microplitis demolitor bracovirus (isolate Webb) (MdBV).